Consider the following 288-residue polypeptide: Nucleotide-binding protein Gura_2968 (288 aa).

An ATP-binding site is contributed by 8–15; sequence GLSGSGKS. 59-62 lines the GTP pocket; the sequence is DIRG.

It belongs to the RapZ-like family.

Its function is as follows. Displays ATPase and GTPase activities. The sequence is that of Nucleotide-binding protein Gura_2968 from Geotalea uraniireducens (strain Rf4) (Geobacter uraniireducens).